We begin with the raw amino-acid sequence, 352 residues long: 3-isopropylmalate dehydrogenase (352 aa).

Position 71–87 (71–87 (GAHDSAWNQLPRHLRPE)) interacts with NAD(+). Arginine 94, arginine 104, arginine 132, and aspartate 218 together coordinate substrate. Mg(2+) contacts are provided by aspartate 218, aspartate 242, and aspartate 246. 275-287 (GSAPDIAGQGVAN) is an NAD(+) binding site.

It belongs to the isocitrate and isopropylmalate dehydrogenases family. LeuB type 1 subfamily. As to quaternary structure, homodimer. The cofactor is Mg(2+). Mn(2+) is required as a cofactor.

It is found in the cytoplasm. It catalyses the reaction (2R,3S)-3-isopropylmalate + NAD(+) = 4-methyl-2-oxopentanoate + CO2 + NADH. Its pathway is amino-acid biosynthesis; L-leucine biosynthesis; L-leucine from 3-methyl-2-oxobutanoate: step 3/4. In terms of biological role, catalyzes the oxidation of 3-carboxy-2-hydroxy-4-methylpentanoate (3-isopropylmalate) to 3-carboxy-4-methyl-2-oxopentanoate. The product decarboxylates to 4-methyl-2 oxopentanoate. The sequence is that of 3-isopropylmalate dehydrogenase from Deinococcus radiodurans (strain ATCC 13939 / DSM 20539 / JCM 16871 / CCUG 27074 / LMG 4051 / NBRC 15346 / NCIMB 9279 / VKM B-1422 / R1).